A 267-amino-acid chain; its full sequence is uncharacterized protein (267 aa).

The WD repeat unit spans residues 50 to 90 (PGLNAVTASKFSPDGRWLLNIADGSGYVQLWDTAKGERVKT).

This is an uncharacterized protein from Deinococcus radiodurans (strain ATCC 13939 / DSM 20539 / JCM 16871 / CCUG 27074 / LMG 4051 / NBRC 15346 / NCIMB 9279 / VKM B-1422 / R1).